Reading from the N-terminus, the 185-residue chain is Threonylcarbamoyl-AMP synthase (185 aa).

One can recognise a YrdC-like domain in the interval 4 to 185; that stretch reads SFRVQQAARE…LATGEVVRPG (182 aa).

This sequence belongs to the SUA5 family. TsaC subfamily.

The protein resides in the cytoplasm. The catalysed reaction is L-threonine + hydrogencarbonate + ATP = L-threonylcarbamoyladenylate + diphosphate + H2O. Functionally, required for the formation of a threonylcarbamoyl group on adenosine at position 37 (t(6)A37) in tRNAs that read codons beginning with adenine. Catalyzes the conversion of L-threonine, HCO(3)(-)/CO(2) and ATP to give threonylcarbamoyl-AMP (TC-AMP) as the acyladenylate intermediate, with the release of diphosphate. The sequence is that of Threonylcarbamoyl-AMP synthase from Pseudomonas putida (strain ATCC 700007 / DSM 6899 / JCM 31910 / BCRC 17059 / LMG 24140 / F1).